A 678-amino-acid polypeptide reads, in one-letter code: MNRKDIKRKSHQECSGKAGGHGRPRQARRHKTCPTPREISKVMASLNLGVLSESSCSVDELLEECIRCFDSAGSLHRGDHILKMVLTMHSWVLPSSDLAARLLTSYQKAAKDARELRQLQICYLVRYWLTHHPEVVHQEPQLEAIINRFWTTVAQEGNMAQRSLGDASNLLSPGGPGPPPLMSSPGLGKKRKVSLLFDHLETEELAQHLTYLEFRSFQAITPQDLRGYVLQGSVRGCPALEGSVGLSNSVSRWVQVMVLSRPGPAQRAQVLDKFIRVAQRLRQMQNFNTLMAVTGGLCHSAISRLKDSHVHLSPDSTKALLELTELLSSHNNYAYYRRTWASCTDFRLPVLGVHLKDLVSLYEAHPDRLPDGRLHLPKLNSLYLRLQELAALQRQHPPCSANEDLLHLLTLSLDLFYTEDEIYELSYAREPRCPKSLPLSPFKAPVVVEWAHGVTPKPDSATLGQHVEQLVESVFKNYDPEGHGSISLEDFEKLSANFPFACHGLHPPPRHGSGSFSREELTKYLLHASAICSKLGLAFLHAFQEVTFRKPTFCHSCNGFVSTGPLWGVTKRGYRCQDCGLCCHRHCRDQVRVECKKRPETKGDPGPPGAPGPATPLPPTGCGSEEGLSYTLSPHLESGCHLHHAWTQTESSHSSWEPEMVPCPAPVLPSKASSKSSV.

2 stretches are compositionally biased toward basic residues: residues 1–10 (MNRKDIKRKS) and 20–32 (GHGRPRQARRHKT). Disordered regions lie at residues 1 to 33 (MNRKDIKRKSHQECSGKAGGHGRPRQARRHKTC) and 165 to 185 (GDASNLLSPGGPGPPPLMSSP). The N-terminal Ras-GEF domain maps to 49–175 (GVLSESSCSV…DASNLLSPGG (127 aa)). The Ras-GEF domain occupies 201–432 (ETEELAQHLT…YELSYAREPR (232 aa)). Residues 466–501 (HVEQLVESVFKNYDPEGHGSISLEDFEKLSANFPFA) form the EF-hand domain. Residues 540–595 (LHAFQEVTFRKPTFCHSCNGFVSTGPLWGVTKRGYRCQDCGLCCHRHCRDQVRVEC) form a Phorbol-ester/DAG-type zinc finger. Disordered regions lie at residues 598-620 (RPETKGDPGPPGAPGPATPLPPT) and 651-678 (SSHSSWEPEMVPCPAPVLPSKASSKSSV). Pro residues predominate over residues 605–619 (PGPPGAPGPATPLPP).

Belongs to the RASGRP family. Expressed by mast cells and their progenitors (at protein level).

It is found in the cytoplasm. Its subcellular location is the cell membrane. Its function is as follows. Functions as a cation- and diacylglycerol (DAG)-regulated nucleotide exchange factor activating Ras through the exchange of bound GDP for GTP. In neutrophils, participates in a phospholipase C-activating N-formyl peptide-activated GPCR (G protein-coupled receptor) signaling pathway by promoting Ras-mediated activation of PIK3CG/PI3Kgamma to promote neutrophil functional responses. In CD117(+) dendritic cells and mast cells, participates in an lipopolysaccharide (LPS)-activated signaling pathway that stimulates the production of interferon-gamma and other pro-inflammatory cytokines by natural killer (NK) cells. May function in mast cell differentiation. Does not appear to be required for the development of B-cells, DC-cells, T-cells, or NK-cells. The protein is RAS guanyl-releasing protein 4 (Rasgrp4) of Rattus norvegicus (Rat).